The chain runs to 599 residues: UvrABC system protein C (599 aa).

The 79-residue stretch at 18–96 folds into the GIY-YIG domain; that stretch reads QLPGVYKMLG…IKQHRPPYNI (79 aa). The 36-residue stretch at 207-242 folds into the UVR domain; it reads KELNQELIAKMEQAAADLEFEKAVFYRDRLSLLREV.

It belongs to the UvrC family. As to quaternary structure, interacts with UvrB in an incision complex.

The protein resides in the cytoplasm. Its function is as follows. The UvrABC repair system catalyzes the recognition and processing of DNA lesions. UvrC both incises the 5' and 3' sides of the lesion. The N-terminal half is responsible for the 3' incision and the C-terminal half is responsible for the 5' incision. The sequence is that of UvrABC system protein C from Acinetobacter baumannii (strain SDF).